Here is a 125-residue protein sequence, read N- to C-terminus: UPF0102 protein PBPRA3228 (125 aa).

The protein belongs to the UPF0102 family.

The protein is UPF0102 protein PBPRA3228 of Photobacterium profundum (strain SS9).